The following is a 59-amino-acid chain: MAKVKITLVKSLIGRKKDQIATVNALGLKKIGNIVQHEETPQISGMIKKVSYLLKVEEA.

It belongs to the universal ribosomal protein uL30 family. As to quaternary structure, part of the 50S ribosomal subunit.

The chain is Large ribosomal subunit protein uL30 from Clostridium botulinum (strain 657 / Type Ba4).